A 432-amino-acid chain; its full sequence is Type I restriction enzyme MjaIX specificity subunit (432 aa).

Belongs to the type-I restriction system S methylase family. As to quaternary structure, the type I restriction/modification system is composed of three polypeptides R, M and S.

The specificity (S) subunit of a type I restriction enzyme; this subunit dictates DNA sequence specificity. The M and S subunits together form a methyltransferase (MTase) that methylates A-3 on the top and A-2 on the bottom strand of the sequence 5'-CCAN(5)GTR-3'. In the presence of the R subunit the complex can also act as an endonuclease, binding to the same target sequence but cutting the DNA some distance from this site. Whether the DNA is cut or modified depends on the methylation state of the target sequence. When the target site is unmodified, the DNA is cut. When the target site is hemimethylated, the complex acts as a maintenance MTase modifying the DNA so that both strands become methylated. After locating a non-methylated recognition site, the enzyme complex serves as a molecular motor that translocates DNA in an ATP-dependent manner until a collision occurs that triggers cleavage. In Methanocaldococcus jannaschii (strain ATCC 43067 / DSM 2661 / JAL-1 / JCM 10045 / NBRC 100440) (Methanococcus jannaschii), this protein is Type I restriction enzyme MjaIX specificity subunit (hsdS).